We begin with the raw amino-acid sequence, 315 residues long: Protoheme IX farnesyltransferase (315 aa).

9 consecutive transmembrane segments (helical) span residues 32 to 52, 53 to 73, 93 to 113, 120 to 140, 153 to 173, 180 to 200, 226 to 246, 249 to 269, and 295 to 315; these read VMSL…GHMN, PVLA…SGAL, IPAG…LSAF, LMVN…YAVI, IVIG…AATG, LVLF…LSLF, ALFY…MGFA, FYGV…WRLW, and IFAV…FGVF.

The protein belongs to the UbiA prenyltransferase family. Protoheme IX farnesyltransferase subfamily.

The protein localises to the cell inner membrane. It catalyses the reaction heme b + (2E,6E)-farnesyl diphosphate + H2O = Fe(II)-heme o + diphosphate. The protein operates within porphyrin-containing compound metabolism; heme O biosynthesis; heme O from protoheme: step 1/1. In terms of biological role, converts heme B (protoheme IX) to heme O by substitution of the vinyl group on carbon 2 of heme B porphyrin ring with a hydroxyethyl farnesyl side group. The protein is Protoheme IX farnesyltransferase of Brucella canis (strain ATCC 23365 / NCTC 10854 / RM-666).